The primary structure comprises 461 residues: Argininosuccinate lyase (461 aa).

It belongs to the lyase 1 family. Argininosuccinate lyase subfamily.

It localises to the cytoplasm. The catalysed reaction is 2-(N(omega)-L-arginino)succinate = fumarate + L-arginine. It participates in amino-acid biosynthesis; L-arginine biosynthesis; L-arginine from L-ornithine and carbamoyl phosphate: step 3/3. This chain is Argininosuccinate lyase, found in Shewanella piezotolerans (strain WP3 / JCM 13877).